A 267-amino-acid chain; its full sequence is Ribosomal RNA small subunit methyltransferase A (267 aa).

Asparagine 13, leucine 15, glycine 39, glutamate 59, aspartate 87, and asparagine 106 together coordinate S-adenosyl-L-methionine.

Belongs to the class I-like SAM-binding methyltransferase superfamily. rRNA adenine N(6)-methyltransferase family. RsmA subfamily.

The protein localises to the cytoplasm. The catalysed reaction is adenosine(1518)/adenosine(1519) in 16S rRNA + 4 S-adenosyl-L-methionine = N(6)-dimethyladenosine(1518)/N(6)-dimethyladenosine(1519) in 16S rRNA + 4 S-adenosyl-L-homocysteine + 4 H(+). Its function is as follows. Specifically dimethylates two adjacent adenosines (A1518 and A1519) in the loop of a conserved hairpin near the 3'-end of 16S rRNA in the 30S particle. May play a critical role in biogenesis of 30S subunits. This is Ribosomal RNA small subunit methyltransferase A from Sulfurimonas denitrificans (strain ATCC 33889 / DSM 1251) (Thiomicrospira denitrificans (strain ATCC 33889 / DSM 1251)).